The sequence spans 155 residues: Cytochrome c-type biogenesis protein CcmE (155 aa).

The Cytoplasmic portion of the chain corresponds to 1 to 8; it reads MNPIRKKR. Residues 9–29 traverse the membrane as a helical; Signal-anchor for type II membrane protein segment; that stretch reads LYWILALLCGVSIAMALALSA. Topologically, residues 30 to 155 are periplasmic; that stretch reads LQENINLFYT…PKRVKQESTR (126 aa). 2 residues coordinate heme: His124 and Tyr128.

This sequence belongs to the CcmE/CycJ family.

It is found in the cell inner membrane. Heme chaperone required for the biogenesis of c-type cytochromes. Transiently binds heme delivered by CcmC and transfers the heme to apo-cytochromes in a process facilitated by CcmF and CcmH. This Janthinobacterium sp. (strain Marseille) (Minibacterium massiliensis) protein is Cytochrome c-type biogenesis protein CcmE.